The sequence spans 637 residues: Chaperone protein HtpG (637 aa).

Residues 1-335 (MQGTVNSERL…SSDLPLNISR (335 aa)) form an a; substrate-binding region. The segment at 336–559 (ETLQNNKIIE…DGSMDIRMER (224 aa)) is b. The interval 560–637 (FLREQKQLNY…RMNSVLSQIN (78 aa)) is c.

This sequence belongs to the heat shock protein 90 family. As to quaternary structure, homodimer.

The protein resides in the cytoplasm. Molecular chaperone. Has ATPase activity. This is Chaperone protein HtpG from Ehrlichia ruminantium (strain Gardel).